A 242-amino-acid polypeptide reads, in one-letter code: Ribosomal RNA small subunit methyltransferase G (242 aa).

S-adenosyl-L-methionine-binding positions include glycine 82, phenylalanine 87, 133–134 (AE), and arginine 152.

It belongs to the methyltransferase superfamily. RNA methyltransferase RsmG family.

The protein localises to the cytoplasm. Its function is as follows. Specifically methylates the N7 position of a guanine in 16S rRNA. In Acetivibrio thermocellus (strain ATCC 27405 / DSM 1237 / JCM 9322 / NBRC 103400 / NCIMB 10682 / NRRL B-4536 / VPI 7372) (Clostridium thermocellum), this protein is Ribosomal RNA small subunit methyltransferase G.